Reading from the N-terminus, the 523-residue chain is Cytidine and dCMP deaminase domain-containing protein 1 (523 aa).

Polar residues predominate over residues 1 to 11 (MKETDQMQSLE). Disordered regions lie at residues 1 to 27 (MKETDQMQSLEGSGAERSVGTQTGSMT) and 55 to 81 (QGQKSQKTEEESRGPLGDNEELTRVST). The region spanning 71 to 169 (GDNEELTRVS…SLLTEASSSE (99 aa)) is the CMP/dCMP-type deaminase 1 domain. His110, Cys135, and Cys138 together coordinate Zn(2+). Residues 272-284 (NLRQNMKDLILLL) carry the Nuclear export signal motif. A CMP/dCMP-type deaminase 2 domain is found at 318–483 (EVARHCMVQA…LNPSEAYSLD (166 aa)). His399 serves as a coordination point for Zn(2+). Glu401 (proton donor) is an active-site residue. Positions 427 and 430 each coordinate Zn(2+). Positions 478-523 (EAYSLDPNEPERRENGVLRRRSAKDEQRSSKRPRLETRSAGRATLQ) are disordered. Residues 486 to 516 (EPERRENGVLRRRSAKDEQRSSKRPRLETRS) are compositionally biased toward basic and acidic residues. A Bipartite nuclear localization signal motif is present at residues 489-511 (RRENGVLRRRSAKDEQRSSKRPR).

The protein belongs to the cytidine and deoxycytidylate deaminase family. It depends on Zn(2+) as a cofactor.

It is found in the cytoplasm. The protein localises to the nucleus. The catalysed reaction is 2'-deoxycytidine + H2O + H(+) = 2'-deoxyuridine + NH4(+). It carries out the reaction cytidine + H2O + H(+) = uridine + NH4(+). In terms of biological role, catalyzes the deamination of cytidine and deoxycytidine into uridine and deoxyuridine, respectively. May play an important role in testicular development and spermatogenesis. The protein is Cytidine and dCMP deaminase domain-containing protein 1 (Cdadc1) of Mus musculus (Mouse).